Here is a 196-residue protein sequence, read N- to C-terminus: uncharacterized protein (196 aa).

The N-terminal stretch at 1–21 (MNGKQCFCFFLFHLFYTGLFA) is a signal peptide. Cys-22 is lipidated: N-palmitoyl cysteine. Cys-22 is lipidated: S-diacylglycerol cysteine.

The protein resides in the cell membrane. This is an uncharacterized protein from Treponema pallidum (strain Nichols).